The following is a 202-amino-acid chain: ERFAPRYIELVIVADHSVATKYNDNVTAILSWVHQLVNNIILFYRDLNVHFTLSAVEVWSNGDLINVQPEATVTLNLFGEWRERDLLNRRMHDNAQLLNNVALDDNTIGLAYDEGMCDPKYSVGIVKDHSAINRMVAATMAHEIGHNLGMNHDGSQCNCGGNGCVMSAVLMQQHSYQFSDCSKDEYQRYLTNHNPQCILNQP.

The Peptidase M12B domain maps to 6 to 202 (RYIELVIVAD…HNPQCILNQP (197 aa)). Glu9 serves as a coordination point for Ca(2+). The N-linked (GlcNAc...) asparagine glycan is linked to Asn25. Asp93 provides a ligand contact to Ca(2+). 3 disulfides stabilise this stretch: Cys117–Cys197, Cys157–Cys181, and Cys159–Cys164. A Zn(2+)-binding site is contributed by His142. Glu143 is a catalytic residue. Zn(2+) contacts are provided by His146 and His152. Cys197 and Asn200 together coordinate Ca(2+).

The protein belongs to the venom metalloproteinase (M12B) family. P-I subfamily. As to quaternary structure, monomer. Requires Zn(2+) as cofactor. In terms of processing, glycosylated. As to expression, expressed by the venom gland.

Its subcellular location is the secreted. It carries out the reaction Hydrolysis of 14-Ala-|-Leu-15 in insulin B chain and 413-Lys-|-Leu-414 in alpha-chain of fibrinogen.. Activated by calcium and magnesium ions. Inhibited by EDTA, DTT and L-cysteine. Activity is not affected by PMSF or heparin. Functionally, has fibrino(geno)lytic activity on the alpha and beta chains of fibrinogen (FGA and FGB). Inhibits human ADP- and collagen-induced platelet aggregation on platelet-rich plasma but does not affect the thrombin-induced aggregation of rabbit washed platelets. Slightly degrades plasminogen. This chain is Snake venom metalloproteinase fibrolase, found in Macrovipera lebetinus (Levantine viper).